Consider the following 208-residue polypeptide: Inner membrane-spanning protein YciB (208 aa).

A run of 5 helical transmembrane segments spans residues Ala-49–Leu-69, Thr-78–His-98, Trp-105–Phe-125, Phe-150–Phe-170, and Phe-178–Leu-198.

This sequence belongs to the YciB family.

The protein localises to the cell inner membrane. Its function is as follows. Plays a role in cell envelope biogenesis, maintenance of cell envelope integrity and membrane homeostasis. This is Inner membrane-spanning protein YciB from Polaromonas naphthalenivorans (strain CJ2).